We begin with the raw amino-acid sequence, 425 residues long: Exodeoxyribonuclease 7 large subunit (425 aa).

This sequence belongs to the XseA family. Heterooligomer composed of large and small subunits.

It localises to the cytoplasm. The catalysed reaction is Exonucleolytic cleavage in either 5'- to 3'- or 3'- to 5'-direction to yield nucleoside 5'-phosphates.. In terms of biological role, bidirectionally degrades single-stranded DNA into large acid-insoluble oligonucleotides, which are then degraded further into small acid-soluble oligonucleotides. The sequence is that of Exodeoxyribonuclease 7 large subunit from Nocardia farcinica (strain IFM 10152).